A 404-amino-acid polypeptide reads, in one-letter code: MEGATFSKYSWIDFVFSVIGACTFLVDWGSDVWLAAEFYRRGDVTWFWVLVGLMALSSFVVQTFSWFWFQYDRELPGFRAQTEAAAVLLGDRAKLSCAVHVLQLGFLCRHISAIRQGFRVWWRKEKGSEYAIYQTHDLSMLRLIETFCESAPQLTLMIYVMLHTHKARAVQFVSIAASTTSIAWMVVDYHRSLRSFLPDKAKQGWGSSLIYFLWNLLLIAPRVAALALCASVLSGYMAAHFLMLWSAFALWAWRQGTHFMDSVAGEWLYRATVGLIWYFSWFNVKDGQTRSRSAIYHSFISTDGAILLATWWCHRDPVQTQSYALALLIALPLFHFLGLLFKALYYCCFHPKLWRPPARDPGLPNDLPDAQVSMRDFPIQDGGLSPKLLNKRMAGQVARFYSDE.

Helical transmembrane passes span 14 to 34, 44 to 64, 169 to 189, 209 to 229, 232 to 252, 262 to 282, 293 to 313, and 324 to 344; these read FVFSVIGACTFLVDWGSDVWL, VTWFWVLVGLMALSSFVVQTF, AVQFVSIAASTTSIAWMVVDY, LIYFLWNLLLIAPRVAALALC, VLSGYMAAHFLMLWSAFALWA, SVAGEWLYRATVGLIWYFSWF, SAIYHSFISTDGAILLATWWC, and ALALLIALPLFHFLGLLFKAL.

This sequence belongs to the XK family.

The protein resides in the cell membrane. The enzyme catalyses a 1,2-diacyl-sn-glycero-3-phospho-L-serine(in) = a 1,2-diacyl-sn-glycero-3-phospho-L-serine(out). Its function is as follows. Phospholipid scramblase that promotes phosphatidylserine exposure on apoptotic cell surface, possibly by mediating phospholipid scrambling. Phosphatidylserine is a specific marker only present at the surface of apoptotic cells and acts as a specific signal for engulfment. In Gasterosteus aculeatus (Three-spined stickleback), this protein is XK-related protein 8.